The chain runs to 704 residues: Ubiquitin-like modifier-activating enzyme atg7 (704 aa).

A GXGXXG motif motif is present at residues 372-377 (GAGTLG). Cysteine 555 serves as the catalytic Glycyl thioester intermediate. Positions 660-699 (ALTEKDYITELSGLAEVQRKAEAAANDVEWDSDEEGMEDE) are homodimerization. A disordered region spans residues 682–704 (AAANDVEWDSDEEGMEDEEPELL). Residues 687–704 (VEWDSDEEGMEDEEPELL) are compositionally biased toward acidic residues.

The protein belongs to the ATG7 family. In terms of assembly, homodimer. Interacts with ATG8 through a thioester bond between Cys-555 and the C-terminal Gly of ATG8 and with ATG12 through a thioester bond between Cys-555 and the C-terminal Gly of ATG12. Also interacts with ATG3.

It is found in the cytoplasm. It localises to the preautophagosomal structure. Functionally, E1-like activating enzyme involved in the 2 ubiquitin-like systems required for cytoplasm to vacuole transport (Cvt) and autophagy. Activates ATG12 for its conjugation with ATG5 and ATG8 for its conjugation with phosphatidylethanolamine. Both systems are needed for the ATG8 association to Cvt vesicles and autophagosomes membranes. Autophagy is essential for maintenance of amino acid levels and protein synthesis under nitrogen starvation. Required for selective autophagic degradation of the nucleus (nucleophagy) as well as for mitophagy which contributes to regulate mitochondrial quantity and quality by eliminating the mitochondria to a basal level to fulfill cellular energy requirements and preventing excess ROS production. Required for normal mycelial growth and conidiogenesis, and regulates sclerotial formation. Plays an essential role in pathogenesis. The chain is Ubiquitin-like modifier-activating enzyme atg7 from Botryotinia fuckeliana (strain T4) (Noble rot fungus).